A 343-amino-acid chain; its full sequence is uncharacterized protein (343 aa).

It belongs to the histone deacetylase family.

Putative deacetylase. This is an uncharacterized protein from Methanocaldococcus jannaschii (strain ATCC 43067 / DSM 2661 / JAL-1 / JCM 10045 / NBRC 100440) (Methanococcus jannaschii).